The sequence spans 609 residues: MAERLSVGALRIINTSDASSFPPNPILQVLTVKELNSNPTSGAPKRYRVVLSDSINYAQSMLSTQLNHLVAENKLQKGAFVQLTQFTVNVMKERKILIVLGLNVLTELGVMDKIGNPAGLETVDALRQQQNEQNNASAPRTGISTSTNSFYGNNAAATAPAPPPMMKKPAAPNSLSTIIYPIEGLSPYQNKWTIRARVTNKSEVKHWHNQRGEGKLFSVNLLDESGEIRATGFNDQVDAFYDILQEGSVYYISRCRVNIAKKQYTNVQNEYELMFERDTEIRKAEDQTAVPVAKFSFVSLQEVGDVAKDAVIDVIGVLQNVGPVQQITSRATSRGFDKRDITIVDQTGYEMRVTLWGKTAIEFSVSEESILAFKGVKVNDFQGRSLSMLTSSTMSVDPDIQESHLLKGWYDGQGRGQEFAKHSVISSTLSTTGRSAERKNIAEVQAEHLGMSETPDYFSLKGTIVYIRKKNVSYPACPAADCNKKVFDQGGSWRCEKCNKEYDAPQYRYIITIAVGDHTGQLWLNVFDDVGKLIMHKTADELNDLQENDENAFMNCMAEACYMPYIFQCRAKQDNFKGEMRVRYTVMSINQMDWKEESKRLINFIESAQ.

Polar residues predominate over residues Gln130–Gly152. Residues Gln130–Met166 form a disordered region. Positions Trp192–Asp278 form a DNA-binding region, OB. Residues Cys477 to Cys498 form a C4-type zinc finger.

This sequence belongs to the replication factor A protein 1 family. As to quaternary structure, component of the heterotrimeric canonical replication protein A complex (RPA).

The protein resides in the nucleus. Functionally, as part of the replication protein A (RPA/RP-A), a single-stranded DNA-binding heterotrimeric complex, may play an essential role in DNA replication, recombination and repair. Binds and stabilizes single-stranded DNA intermediates, preventing complementary DNA reannealing and recruiting different proteins involved in DNA metabolism. The protein is Replication factor A protein 1 (ssb1) of Schizosaccharomyces pombe (strain 972 / ATCC 24843) (Fission yeast).